Consider the following 809-residue polypeptide: DNA replication helicase (809 aa).

72 to 79 (GTAGAGKS) contacts ATP.

Belongs to the herpesviridae helicase family. In terms of assembly, associates with the primase and the primase-associated factor to form the helicase-primase complex.

The protein resides in the host nucleus. In terms of biological role, component of the helicase/primase complex. Unwinds the DNA at the replication forks and generates single-stranded DNA for both leading and lagging strand synthesis. The primase synthesizes short RNA primers on the lagging strand that the polymerase elongates using dNTPs. Possesses helicase-like motifs and therefore may act as the helicase subunit of the complex. The chain is DNA replication helicase from Epstein-Barr virus (strain B95-8) (HHV-4).